The sequence spans 113 residues: T cell receptor alpha variable 8-1 (113 aa).

An N-terminal signal peptide occupies residues Met-1 to Ala-20. The Ig-like domain occupies Gln-21–Asn-113. Residues Cys-42 and Cys-110 are joined by a disulfide bond. A glycan (N-linked (GlcNAc...) asparagine) is linked at Asn-43.

Alpha-beta TR is a heterodimer composed of an alpha and beta chain; disulfide-linked. The alpha-beta TR is associated with the transmembrane signaling CD3 coreceptor proteins to form the TR-CD3 (TcR or TCR). The assembly of alpha-beta TR heterodimers with CD3 occurs in the endoplasmic reticulum where a single alpha-beta TR heterodimer associates with one CD3D-CD3E heterodimer, one CD3G-CD3E heterodimer and one CD247 homodimer forming a stable octameric structure. CD3D-CD3E and CD3G-CD3E heterodimers preferentially associate with TR alpha and TR beta chains, respectively. The association of the CD247 homodimer is the last step of TcR assembly in the endoplasmic reticulum and is required for transport to the cell surface.

The protein resides in the cell membrane. Functionally, v region of the variable domain of T cell receptor (TR) alpha chain that participates in the antigen recognition. Alpha-beta T cell receptors are antigen specific receptors which are essential to the immune response and are present on the cell surface of T lymphocytes. Recognize peptide-major histocompatibility (MH) (pMH) complexes that are displayed by antigen presenting cells (APC), a prerequisite for efficient T cell adaptive immunity against pathogens. Binding of alpha-beta TR to pMH complex initiates TR-CD3 clustering on the cell surface and intracellular activation of LCK that phosphorylates the ITAM motifs of CD3G, CD3D, CD3E and CD247 enabling the recruitment of ZAP70. In turn ZAP70 phosphorylates LAT, which recruits numerous signaling molecules to form the LAT signalosome. The LAT signalosome propagates signal branching to three major signaling pathways, the calcium, the mitogen-activated protein kinase (MAPK) kinase and the nuclear factor NF-kappa-B (NF-kB) pathways, leading to the mobilization of transcription factors that are critical for gene expression and essential for T cell growth and differentiation. The T cell repertoire is generated in the thymus, by V-(D)-J rearrangement. This repertoire is then shaped by intrathymic selection events to generate a peripheral T cell pool of self-MH restricted, non-autoaggressive T cells. Post-thymic interaction of alpha-beta TR with the pMH complexes shapes TR structural and functional avidity. The polypeptide is T cell receptor alpha variable 8-1 (Homo sapiens (Human)).